Here is a 551-residue protein sequence, read N- to C-terminus: Probable terpene synthase 8 (551 aa).

3 residues coordinate Mg(2+): Asp-307, Asp-311, and Glu-457. A DDXXD motif motif is present at residues 307 to 311 (DDTYD).

It belongs to the terpene synthase family. It depends on Mg(2+) as a cofactor.

Its function is as follows. Probable sesquiterpene synthase. The protein is Probable terpene synthase 8 (TPS8) of Ricinus communis (Castor bean).